A 1098-amino-acid chain; its full sequence is PAN2-PAN3 deadenylation complex catalytic subunit PAN2 (1098 aa).

4 WD repeats span residues 19–58 (ASKDPVTSLLFDSVHNLLWCGDSSGSARSFTPNAGYPFQL), 150–190 (TGFD…SVKS), 253–293 (PFPN…KLNV), and 300–338 (PASPGISRMEISDNGEYICCSEGRSLHLWSFTSDTNFVN). The segment at 340–466 (PAPLEEQDIP…SIFHLKSPTS (127 aa)) is linker. The segment at 417–442 (RNISQPYQSLREPPGSNSNAPRFISE) is disordered. Positions 466–839 (SVPHCYSRLQ…KPVIIVYSEP (374 aa)) constitute a USP domain. An Exonuclease domain is found at 894–1067 (IAIDAEFVVS…EDAYTALMLF (174 aa)). Positions 897, 899, 1006, and 1059 each coordinate a divalent metal cation.

This sequence belongs to the peptidase C19 family. PAN2 subfamily. Forms a heterotrimer with an asymmetric homodimer of the regulatory subunit PAN3 to form the poly(A)-nuclease (PAN) deadenylation complex. It depends on a divalent metal cation as a cofactor.

Its subcellular location is the cytoplasm. It carries out the reaction Exonucleolytic cleavage of poly(A) to 5'-AMP.. Positively regulated by the regulatory subunit PAN3. Catalytic subunit of the poly(A)-nuclease (PAN) deadenylation complex, one of two cytoplasmic mRNA deadenylases involved in mRNA turnover. PAN specifically shortens poly(A) tails of RNA and the activity is stimulated by poly(A)-binding protein PAB1. PAN deadenylation is followed by rapid degradation of the shortened mRNA tails by the CCR4-NOT complex. Deadenylated mRNAs are then degraded by two alternative mechanisms, namely exosome-mediated 3'-5' exonucleolytic degradation, or deadenylation-dependent mRNA decaping and subsequent 5'-3' exonucleolytic degradation by XRN1. May also be involved in post-transcriptional maturation of mRNA poly(A) tails. This Meyerozyma guilliermondii (strain ATCC 6260 / CBS 566 / DSM 6381 / JCM 1539 / NBRC 10279 / NRRL Y-324) (Yeast) protein is PAN2-PAN3 deadenylation complex catalytic subunit PAN2.